The sequence spans 1067 residues: Tricorn protease homolog 1 (1067 aa).

Residues 518–551 (TTPSPFGPQRHGRPFETPDREETPDSEGTPTTRI) form a disordered region. Over residues 530–540 (RPFETPDREET) the composition is skewed to basic and acidic residues. His-740 (charge relay system) is an active-site residue. The segment at 754 to 851 (RQGLLGADLS…HAVVVPLADE (98 aa)) is PDZ-like. Gly-914 serves as a coordination point for substrate. The active-site Nucleophile is the Ser-961. Glu-1019 (charge relay system) is an active-site residue.

It belongs to the peptidase S41B family. In terms of assembly, forms a homohexameric complex; it is not known if it assembles into higher-order structures.

The protein resides in the cytoplasm. With respect to regulation, stimulated by MgCl2. Functionally, degrades oligopeptides in a sequential manner. The protein is Tricorn protease homolog 1 (tri1) of Streptomyces coelicolor (strain ATCC BAA-471 / A3(2) / M145).